Here is a 365-residue protein sequence, read N- to C-terminus: Leu/Ile/Val/Thr-binding protein (365 aa).

A signal peptide spans Met1–Ala21. Cys74 and Cys99 are joined by a disulfide.

Belongs to the leucine-binding protein family.

The protein resides in the periplasm. This protein is a component of the leucine, isoleucine, valine, threonine transport system, which is one of the two periplasmic binding protein-dependent transport systems of the high-affinity transport of the branched-chain amino acids. This chain is Leu/Ile/Val/Thr-binding protein (livJ), found in Salmonella typhimurium (strain LT2 / SGSC1412 / ATCC 700720).